Reading from the N-terminus, the 471-residue chain is Putative metabolite transport protein YncC (471 aa).

The next 12 helical transmembrane spans lie at 13–33, 50–70, 88–108, 111–131, 146–166, 175–195, 256–276, 295–315, 323–343, 358–378, 393–413, and 416–436; these read LIMI…GVIN, VTEG…ALLC, FLFF…IMAV, FLLG…LAEM, LMIV…GVTM, YMLV…LKVP, LLWI…NSIM, IANI…IWLV, ILLI…IFSI, LTVL…WLVI, ISVF…PILL, and VGLS…IGFV.

This sequence belongs to the major facilitator superfamily. Sugar transporter (TC 2.A.1.1) family.

It localises to the cell membrane. In Bacillus subtilis (strain 168), this protein is Putative metabolite transport protein YncC (yncC).